A 472-amino-acid polypeptide reads, in one-letter code: Arabinose-proton symporter (472 aa).

Over 1 to 29 the chain is Cytoplasmic; it reads MVTINTESALTPRSLRDTRRMNMFVSVAA. The helical transmembrane segment at 30 to 50 threads the bilayer; it reads AVAGLLFGLDIGVIAGALPFI. Topologically, residues 51–63 are periplasmic; the sequence is TDHFVLTSRLQEW. The chain crosses the membrane as a helical span at residues 64–84; sequence VVSSMMLGAAIGALFNGWLSF. The Cytoplasmic portion of the chain corresponds to 85 to 91; sequence RLGRKYS. The chain crosses the membrane as a helical span at residues 92–112; the sequence is LMAGAILFVLGSIGSAFATSV. The Periplasmic portion of the chain corresponds to 113 to 114; the sequence is EM. The helical transmembrane segment at 115 to 135 threads the bilayer; the sequence is LIAARVVLGIAVGIASYTAPL. The Cytoplasmic segment spans residues 136–154; sequence YLSEMASENVRGKMISMYQ. The chain crosses the membrane as a helical span at residues 155–175; it reads LMVTLGIVLAFLSDTAFSYSG. The Periplasmic portion of the chain corresponds to 176–178; it reads NWR. Residues 179–199 form a helical membrane-spanning segment; that stretch reads AMLGVLALPAVLLIILVVFLP. At 200–257 the chain is on the cytoplasmic side; that stretch reads NSPRWLAEKGRHIEAEEVLRMLRDTSEKAREELNEIRESLKLKQGGWALFKINRNVRR. The chain crosses the membrane as a helical span at residues 258–278; the sequence is AVFLGMLLQAMQQFTGMNIIM. Topologically, residues 279 to 297 are periplasmic; that stretch reads YYAPRIFKMAGFTTTEQQM. Residues 298–318 form a helical membrane-spanning segment; the sequence is IATLVVGLTFMFATFIAVFTV. At 319–325 the chain is on the cytoplasmic side; the sequence is DKAGRKP. The helical transmembrane segment at 326–346 threads the bilayer; sequence ALKIGFSVMALGTLVLGYCLM. Topologically, residues 347 to 361 are periplasmic; the sequence is QFDNGTASSGLSWLS. Residues 362 to 382 form a helical membrane-spanning segment; that stretch reads VGMTMMCIAGYAMSAAPVVWI. Topologically, residues 383–404 are cytoplasmic; it reads LCSEIQPLKCRDFGITCSTTTN. 2 consecutive transmembrane segments (helical) span residues 405–425 and 426–446; these read WVSN…IGAA and GTFW…FWLI. At 447 to 472 the chain is on the cytoplasmic side; it reads PETKNVTLEHIERKLMAGEKLRNIGV.

This sequence belongs to the major facilitator superfamily. Sugar transporter (TC 2.A.1.1) family.

It localises to the cell inner membrane. The catalysed reaction is L-arabinose(in) + H(+)(in) = L-arabinose(out) + H(+)(out). Its function is as follows. Uptake of L-arabinose across the cytoplasmic membrane with the concomitant transport of protons into the cell (symport system). In Escherichia coli O157:H7, this protein is Arabinose-proton symporter (araE).